A 197-amino-acid chain; its full sequence is ATP synthase subunit delta (197 aa).

Positions 1-16 are enriched in low complexity; sequence MSSAVSASPQAASPQQ. A disordered region spans residues 1-20; that stretch reads MSSAVSASPQAASPQQDRTS.

This sequence belongs to the ATPase delta chain family. F-type ATPases have 2 components, F(1) - the catalytic core - and F(0) - the membrane proton channel. F(1) has five subunits: alpha(3), beta(3), gamma(1), delta(1), epsilon(1). F(0) has three main subunits: a(1), b(2) and c(10-14). The alpha and beta chains form an alternating ring which encloses part of the gamma chain. F(1) is attached to F(0) by a central stalk formed by the gamma and epsilon chains, while a peripheral stalk is formed by the delta and b chains.

The protein resides in the cell inner membrane. In terms of biological role, f(1)F(0) ATP synthase produces ATP from ADP in the presence of a proton or sodium gradient. F-type ATPases consist of two structural domains, F(1) containing the extramembraneous catalytic core and F(0) containing the membrane proton channel, linked together by a central stalk and a peripheral stalk. During catalysis, ATP synthesis in the catalytic domain of F(1) is coupled via a rotary mechanism of the central stalk subunits to proton translocation. This protein is part of the stalk that links CF(0) to CF(1). It either transmits conformational changes from CF(0) to CF(1) or is implicated in proton conduction. This is ATP synthase subunit delta from Acidiphilium cryptum (strain JF-5).